The chain runs to 459 residues: Smoothelin-like protein 1 (459 aa).

The segment covering methionine 1–serine 27 has biased composition (polar residues). Residues methionine 1–arginine 314 form a disordered region. Basic and acidic residues-rich tracts occupy residues serine 42–cysteine 55, aspartate 75–threonine 105, aspartate 112–alanine 168, alanine 185–valine 211, and glutamate 221–alanine 232. Positions asparagine 124–serine 154 form a coiled coil. Residues proline 260–threonine 283 show a composition bias toward low complexity. Positions proline 287–valine 300 are enriched in basic and acidic residues. At serine 301 the chain carries Phosphoserine; by PKA and PKG. The 107-residue stretch at glycine 343 to valine 449 folds into the Calponin-homology (CH) domain. A calmodulin-binding region spans residues isoleucine 441–lysine 459.

This sequence belongs to the smoothelin family. Interacts with PPP1R12A. Post-translationally, maximal phosphorylation of Ser-301 correlates with maximal relaxation of aorta in response to acetylcholine. As to expression, widely expressed, with highest expression in skeletal muscles (at protein level). Within striated muscles, significantly more expressed in soleus muscle compared with plantaris muscle or white vastus (at protein level). 30-40% lower expression in females than in males (at protein level). Expressed in type 2a fibers, but not detected in fast twitch type 2b muscle white vastus nor in oxidative type I/b heart muscle (at protein level). Expressed within myometrial cells of the uterus, as well as in the endometrial layer. In the aorta, confined to smooth muscle cells. Not detected in endothelial cells.

The protein localises to the cytoplasm. Its subcellular location is the myofibril. It is found in the sarcomere. It localises to the i band. The protein resides in the m line. The protein localises to the nucleus. Plays a role in the regulation of contractile properties of both striated and smooth muscles. When unphosphorylated, may inhibit myosin dephosphorylation. Phosphorylation at Ser-301 reduces this inhibitory activity. This chain is Smoothelin-like protein 1 (Smtnl1), found in Mus musculus (Mouse).